The chain runs to 586 residues: Dolichyl-diphosphooligosaccharide--protein glycosyltransferase subunit 1 (586 aa).

The first 15 residues, 1–15 (MRLLFAIALLGAVFA), serve as a signal peptide directing secretion. Residues 16–421 (EDAWKAANVD…EFEFVDMLRE (406 aa)) lie on the Lumenal side of the membrane. The chain crosses the membrane as a helical span at residues 422-442 (PLLASAFFFSLFFVIIVYSRF). The Cytoplasmic segment spans residues 443 to 586 (DFTISSDPAK…NRADSVLASI (144 aa)).

The protein belongs to the OST1 family. In terms of assembly, component of the oligosaccharyltransferase (OST) complex.

It is found in the endoplasmic reticulum membrane. The protein resides in the cytoplasmic granule. It functions in the pathway protein modification; protein glycosylation. Its function is as follows. Subunit of the oligosaccharyl transferase (OST) complex that catalyzes the initial transfer of a defined glycan (Glc(3)Man(9)GlcNAc(2) in eukaryotes) from the lipid carrier dolichol-pyrophosphate to an asparagine residue within an Asn-X-Ser/Thr consensus motif in nascent polypeptide chains, the first step in protein N-glycosylation. N-glycosylation occurs cotranslationally and the complex associates with the Sec61 complex at the channel-forming translocon complex that mediates protein translocation across the endoplasmic reticulum (ER). All subunits are required for a maximal enzyme activity. The chain is Dolichyl-diphosphooligosaccharide--protein glycosyltransferase subunit 1 from Caenorhabditis elegans.